The primary structure comprises 266 residues: Zinc transport system ATP-binding protein TroB (266 aa).

An ABC transporter domain is found at 11-243; that stretch reads VQVDDLTLAY…YVQRAYGGRI (233 aa). 43–50 lines the ATP pocket; sequence GPNGAGKS.

This sequence belongs to the ABC transporter superfamily.

Its function is as follows. Part of an ATP-driven transport system TroABCD for zinc. The polypeptide is Zinc transport system ATP-binding protein TroB (troB) (Treponema pallidum (strain Nichols)).